The following is a 229-amino-acid chain: Small ribosomal subunit protein uS3 (229 aa).

The KH type-2 domain maps to 38–106 (IREYIENKLF…KVHINVMEVK (69 aa)). Over residues 208–217 (PEVDENEETK) the composition is skewed to acidic residues. Residues 208–229 (PEVDENEETKEENKEKSEEKSE) form a disordered region. Positions 218–229 (EENKEKSEEKSE) are enriched in basic and acidic residues.

It belongs to the universal ribosomal protein uS3 family. In terms of assembly, part of the 30S ribosomal subunit. Forms a tight complex with proteins S10 and S14.

In terms of biological role, binds the lower part of the 30S subunit head. Binds mRNA in the 70S ribosome, positioning it for translation. This chain is Small ribosomal subunit protein uS3, found in Natranaerobius thermophilus (strain ATCC BAA-1301 / DSM 18059 / JW/NM-WN-LF).